The following is a 226-amino-acid chain: 2-C-methyl-D-erythritol 4-phosphate cytidylyltransferase (226 aa).

It belongs to the IspD/TarI cytidylyltransferase family. IspD subfamily.

It carries out the reaction 2-C-methyl-D-erythritol 4-phosphate + CTP + H(+) = 4-CDP-2-C-methyl-D-erythritol + diphosphate. Its pathway is isoprenoid biosynthesis; isopentenyl diphosphate biosynthesis via DXP pathway; isopentenyl diphosphate from 1-deoxy-D-xylulose 5-phosphate: step 2/6. Its function is as follows. Catalyzes the formation of 4-diphosphocytidyl-2-C-methyl-D-erythritol from CTP and 2-C-methyl-D-erythritol 4-phosphate (MEP). The sequence is that of 2-C-methyl-D-erythritol 4-phosphate cytidylyltransferase from Trichodesmium erythraeum (strain IMS101).